Reading from the N-terminus, the 466-residue chain is Chromosomal replication initiator protein DnaA (466 aa).

The segment at 1–86 (MSLSLWQQCL…EVGTKPVTQT (86 aa)) is domain I, interacts with DnaA modulators. The segment at 86–129 (TLKTPVHNVVAPTQTTTAQPQRVAPAARSGWDNVPAPAEPTYRS) is domain II. The segment at 130–346 (NVNVKHTFDN…GALNRVIANA (217 aa)) is domain III, AAA+ region. Residues Gly-174, Gly-176, Lys-177, and Thr-178 each contribute to the ATP site. Residues 347 to 466 (NFTGRAITID…FSNLIRTLSS (120 aa)) are domain IV, binds dsDNA.

This sequence belongs to the DnaA family. Oligomerizes as a right-handed, spiral filament on DNA at oriC.

It localises to the cytoplasm. Functionally, plays an essential role in the initiation and regulation of chromosomal replication. ATP-DnaA binds to the origin of replication (oriC) to initiate formation of the DNA replication initiation complex once per cell cycle. Binds the DnaA box (a 9 base pair repeat at the origin) and separates the double-stranded (ds)DNA. Forms a right-handed helical filament on oriC DNA; dsDNA binds to the exterior of the filament while single-stranded (ss)DNA is stabiized in the filament's interior. The ATP-DnaA-oriC complex binds and stabilizes one strand of the AT-rich DNA unwinding element (DUE), permitting loading of DNA polymerase. After initiation quickly degrades to an ADP-DnaA complex that is not apt for DNA replication. Binds acidic phospholipids. The chain is Chromosomal replication initiator protein DnaA from Salmonella gallinarum (strain 287/91 / NCTC 13346).